The primary structure comprises 629 residues: Coiled-coil domain-containing protein 120 (629 aa).

The involved in CYTH2-binding stretch occupies residues 31 to 70 (RLRGLLDRQRALQEALSVKLQELRKVCLQEAELTGQLPPE). A coiled-coil region spans residues 109–173 (ELALEALERE…LRDFRARLGL (65 aa)). 2 stretches are compositionally biased toward low complexity: residues 209–219 (HSESSSLSESG) and 279–294 (ASPT…SASS). Positions 209 to 356 (HSESSSLSES…LFAARTRRSN (148 aa)) are disordered. Over residues 323–332 (RQWSGSQDSQ) the composition is skewed to polar residues. A phosphoserine mark is found at Ser355 and Ser357. Disordered regions lie at residues 399 to 432 (QPVP…GAPR) and 602 to 629 (PSQA…FTDG). A compositionally biased stretch (low complexity) spans 418–432 (ARPSSAAPASRGAPR). The residue at position 432 (Arg432) is an Omega-N-methylarginine.

In terms of assembly, interacts with NIN and CEP170; leading to recruit them to centrosomes. Interacts with CYTH2; this interaction is direct and stabilizes CCDC120, possibly by preventing ubiquitination. In terms of processing, ubiquitinated; interaction with CYTH2 may prevent ubiquitination.

The protein localises to the cytoplasm. The protein resides in the cytoskeleton. Its subcellular location is the microtubule organizing center. It localises to the centrosome. It is found in the centriole. The protein localises to the cell projection. The protein resides in the neuron projection. Its subcellular location is the growth cone. It localises to the endosome. Centriolar protein required for centriole subdistal appendage assembly and microtubule anchoring in interphase cells. Together with CCDC68, cooperate with subdistal appendage components ODF2, NIN and CEP170 for hierarchical subdistal appendage assembly. Recruits NIN and CEP170 to centrosomes. Also required for neurite growth. Localizes CYTH2 to vesicles to allow its transport along neurites, and subsequent ARF6 activation and neurite growth. This is Coiled-coil domain-containing protein 120 from Mus musculus (Mouse).